The chain runs to 116 residues: Vesicle-associated membrane protein 2 (116 aa).

Positions 1–33 (MSATAATAPPAAPAGEGGPPAPPPNLTSNRRLQ) are disordered. An N-acetylserine modification is found at Ser2. Residues 2–94 (SATAATAPPA…KRKYWWKNLK (93 aa)) lie on the Cytoplasmic side of the membrane. The region spanning 31 to 91 (RLQQTQAQVD…AKLKRKYWWK (61 aa)) is the v-SNARE coiled-coil homology domain. The segment at 92-116 (NLKMMIILGVICAIILIIIIVYFSS) is required for interaction with SEPT8. Residues 95–114 (MMIILGVICAIILIIIIVYF) traverse the membrane as a helical; Anchor for type IV membrane protein segment. At 115–116 (SS) the chain is on the vesicular side.

Belongs to the synaptobrevin family. In terms of assembly, part of the SNARE core complex containing SNAP25, VAMP2 and STX1A; this complex constitutes the basic catalytic machinery of the complex neurotransmitter release apparatus. Recruited to the SNARE complex following binding of the SNARE complex component STX1A to STXBP1. This complex binds to CPLX1. Interacts with POPDC1 and STX4. Interacts with VAPA and VAPB. Interacts with WDFY2, PRKCZ and PRKCI. Forms a complex with WDFY2 and PRKCZ. Interacts (via N-terminus) with KCNB1 (via N-terminus and C-terminus); stimulates the channel inactivation rate of KCNB1. Interacts with SEPT8; the interaction inhibits interaction of VAMP2 with SYP. Interacts with SYP; the interaction is inhibited by interaction with SEPT8. Interacts with PICALM. Interacts with alpha-synuclein/SNCA. Interacts with STX3. In terms of processing, phosphorylated by PRKCZ in vitro and this phosphorylation is increased in the presence of WDFY2.

The protein resides in the cytoplasmic vesicle. Its subcellular location is the secretory vesicle. It is found in the synaptic vesicle membrane. The protein localises to the cell membrane. Involved in the targeting and/or fusion of transport vesicles to their target membrane. Major SNARE protein of synaptic vesicles which mediates fusion of synaptic vesicles to release neurotransmitters. Essential for fast vesicular exocytosis and activity-dependent neurotransmitter release as well as fast endocytosis that mediates rapid reuse of synaptic vesicles. Modulates the gating characteristics of the delayed rectifier voltage-dependent potassium channel KCNB1. The chain is Vesicle-associated membrane protein 2 (VAMP2) from Bos taurus (Bovine).